The following is a 123-amino-acid chain: Late histone H2B.L1 (123 aa).

Positions 1–10 (MPAKAQPAGK) are enriched in low complexity. The interval 1-33 (MPAKAQPAGKKGSKKAKAPRPSGGKKRRRRRKE) is disordered. Residues 11–32 (KGSKKAKAPRPSGGKKRRRRRK) are compositionally biased toward basic residues. O-linked (GlcNAc) serine glycosylation occurs at Ser-110. A Glycyl lysine isopeptide (Lys-Gly) (interchain with G-Cter in ubiquitin) cross-link involves residue Lys-118.

It belongs to the histone H2B family. The nucleosome is a histone octamer containing two molecules each of H2A, H2B, H3 and H4 assembled in one H3-H4 heterotetramer and two H2A-H2B heterodimers. The octamer wraps approximately 147 bp of DNA. Monoubiquitination of Lys-118 gives a specific tag for epigenetic transcriptional activation and is also prerequisite for histone H3 'Lys-4' and 'Lys-79' methylation. In terms of processing, glcNAcylation at Ser-110 promotes monoubiquitination of Lys-118. It fluctuates in response to extracellular glucose, and associates with transcribed genes.

It localises to the nucleus. It is found in the chromosome. Its function is as follows. Core component of nucleosome. Nucleosomes wrap and compact DNA into chromatin, limiting DNA accessibility to the cellular machineries which require DNA as a template. Histones thereby play a central role in transcription regulation, DNA repair, DNA replication and chromosomal stability. DNA accessibility is regulated via a complex set of post-translational modifications of histones, also called histone code, and nucleosome remodeling. The polypeptide is Late histone H2B.L1 (Strongylocentrotus purpuratus (Purple sea urchin)).